Consider the following 275-residue polypeptide: Rhamnulose-1-phosphate aldolase (275 aa).

The active site involves Glu117. His141, His143, and His212 together coordinate Zn(2+).

This sequence belongs to the aldolase class II family. RhaD subfamily. As to quaternary structure, homotetramer. Zn(2+) is required as a cofactor.

Its subcellular location is the cytoplasm. It catalyses the reaction L-rhamnulose 1-phosphate = (S)-lactaldehyde + dihydroxyacetone phosphate. It functions in the pathway carbohydrate degradation; L-rhamnose degradation; glycerone phosphate from L-rhamnose: step 3/3. Functionally, catalyzes the reversible cleavage of L-rhamnulose-1-phosphate to dihydroxyacetone phosphate (DHAP) and L-lactaldehyde. The protein is Rhamnulose-1-phosphate aldolase of Citrobacter koseri (strain ATCC BAA-895 / CDC 4225-83 / SGSC4696).